The chain runs to 302 residues: Pyridoxal 5'-phosphate synthase subunit PdxS (302 aa).

Aspartate 32 provides a ligand contact to D-ribose 5-phosphate. Lysine 89 acts as the Schiff-base intermediate with D-ribose 5-phosphate in catalysis. Glycine 161 is a binding site for D-ribose 5-phosphate. Residue arginine 173 participates in D-glyceraldehyde 3-phosphate binding. Residues glycine 222 and 243 to 244 (GS) contribute to the D-ribose 5-phosphate site. The segment at 275–302 (IAKNPGKGMKGQANADLDEEEQLQGRGV) is disordered.

The protein belongs to the PdxS/SNZ family. In the presence of PdxT, forms a dodecamer of heterodimers.

It catalyses the reaction aldehydo-D-ribose 5-phosphate + D-glyceraldehyde 3-phosphate + L-glutamine = pyridoxal 5'-phosphate + L-glutamate + phosphate + 3 H2O + H(+). The protein operates within cofactor biosynthesis; pyridoxal 5'-phosphate biosynthesis. Functionally, catalyzes the formation of pyridoxal 5'-phosphate from ribose 5-phosphate (RBP), glyceraldehyde 3-phosphate (G3P) and ammonia. The ammonia is provided by the PdxT subunit. Can also use ribulose 5-phosphate and dihydroxyacetone phosphate as substrates, resulting from enzyme-catalyzed isomerization of RBP and G3P, respectively. The sequence is that of Pyridoxal 5'-phosphate synthase subunit PdxS from Haloarcula marismortui (strain ATCC 43049 / DSM 3752 / JCM 8966 / VKM B-1809) (Halobacterium marismortui).